We begin with the raw amino-acid sequence, 144 residues long: Prefoldin subunit alpha (144 aa).

The protein belongs to the prefoldin alpha subunit family. In terms of assembly, heterohexamer of two alpha and four beta subunits.

The protein resides in the cytoplasm. In terms of biological role, molecular chaperone capable of stabilizing a range of proteins. Seems to fulfill an ATP-independent, HSP70-like function in archaeal de novo protein folding. In Methanococcus maripaludis (strain C7 / ATCC BAA-1331), this protein is Prefoldin subunit alpha.